Here is a 248-residue protein sequence, read N- to C-terminus: uncharacterized protein (248 aa).

The stretch at 33-57 forms a coiled coil; that stretch reads EWQLSEGQKRCEEINRQNRQLRVEK.

This is an uncharacterized protein from Escherichia coli (strain K12).